The chain runs to 202 residues: Small ribosomal subunit protein uS4c (202 aa).

Over residues 1 to 13 (MSRYRGPRMKMIR) the composition is skewed to basic residues. The segment at 1–41 (MSRYRGPRMKMIRRPGTLPGLTSKTPGTKVGSSDRSTSSKK) is disordered. Over residues 29–41 (KVGSSDRSTSSKK) the composition is skewed to low complexity. The S4 RNA-binding domain maps to 90-153 (MRLDNTIFRL…KCRLVDRRDM (64 aa)).

The protein belongs to the universal ribosomal protein uS4 family. As to quaternary structure, part of the 30S ribosomal subunit. Contacts protein S5. The interaction surface between S4 and S5 is involved in control of translational fidelity.

It localises to the plastid. Functionally, one of the primary rRNA binding proteins, it binds directly to 16S rRNA where it nucleates assembly of the body of the 30S subunit. With S5 and S12 plays an important role in translational accuracy. This chain is Small ribosomal subunit protein uS4c (rps4), found in Aneura mirabilis (Parasitic liverwort).